The sequence spans 168 residues: MEPPNLYPVKLYVYDLSKGLARRLSPIMLGKQLEGIWHTSIVVHKDEFFFGSGGISSCPPGGTLLGPPDSVVDVGSTEVTEEIFLEYLSSLGESLFRGEAYNLFEHNCNTFSNEVAQFLTGRKIPSYITDLPSEVLSTPFGQALRPLLDSIQIQPPGGSSVGRPNGQS.

One can recognise a PPPDE domain in the interval 7 to 149 (YPVKLYVYDL…FGQALRPLLD (143 aa)). Residue His38 is part of the active site. Positions 83 to 91 (IFLEYLSSL) match the Nuclear export signal 1 motif. Cys108 is a catalytic residue. Residues 139 to 153 (PFGQALRPLLDSIQI) carry the Nuclear export signal 2 motif.

The protein belongs to the DeSI family. In terms of assembly, homodimer. Interacts with UBQLN4; leading to the export of UBQLN4 from the nucleus.

It localises to the cytoplasm. Its subcellular location is the nucleus. The enzyme catalyses S-hexadecanoyl-L-cysteinyl-[protein] + H2O = L-cysteinyl-[protein] + hexadecanoate + H(+). Palmostatin B inhibits its palmitoyl protein thioesterase activity. In terms of biological role, protease which deconjugates SUMO1, SUMO2 and SUMO3 from some substrate proteins. Has isopeptidase but not SUMO-processing activity. Desumoylates ZBTB46. Collaborates with UBQLN4 in the export of ubiquitinated proteins from the nucleus to the cytoplasm. Exhibits palmitoyl protein thioesterase (S-depalmitoylation) activity towards synthetic substrates 4-methylumbelliferyl-6-S-palmitoyl-beta-D-glucopyranoside and S-depalmitoylation probe 5 (DPP-5). The chain is Desumoylating isopeptidase 1 from Homo sapiens (Human).